The chain runs to 211 residues: Imidazole glycerol phosphate synthase subunit HisH (211 aa).

The Glutamine amidotransferase type-1 domain maps to Met1–Met211. Catalysis depends on Cys79, which acts as the Nucleophile. Active-site residues include His186 and Glu188.

As to quaternary structure, heterodimer of HisH and HisF.

The protein localises to the cytoplasm. The enzyme catalyses 5-[(5-phospho-1-deoxy-D-ribulos-1-ylimino)methylamino]-1-(5-phospho-beta-D-ribosyl)imidazole-4-carboxamide + L-glutamine = D-erythro-1-(imidazol-4-yl)glycerol 3-phosphate + 5-amino-1-(5-phospho-beta-D-ribosyl)imidazole-4-carboxamide + L-glutamate + H(+). It catalyses the reaction L-glutamine + H2O = L-glutamate + NH4(+). It participates in amino-acid biosynthesis; L-histidine biosynthesis; L-histidine from 5-phospho-alpha-D-ribose 1-diphosphate: step 5/9. In terms of biological role, IGPS catalyzes the conversion of PRFAR and glutamine to IGP, AICAR and glutamate. The HisH subunit catalyzes the hydrolysis of glutamine to glutamate and ammonia as part of the synthesis of IGP and AICAR. The resulting ammonia molecule is channeled to the active site of HisF. The polypeptide is Imidazole glycerol phosphate synthase subunit HisH (Geobacillus sp. (strain WCH70)).